The chain runs to 282 residues: Stress response regulator protein 1 (282 aa).

2 stretches are compositionally biased toward low complexity: residues 12–30 and 41–58; these read NLSRSSSPAAPPTTNHSST and SLDTNSQSDSNSTQSNNN. Disordered stretches follow at residues 12–31, 41–84, and 112–139; these read NLSRSSSPAAPPTTNHSSTV, SLDT…DDED, and LTPFDGQTTSPQDSIISSKSSNKSTTVV. Residues 66–77 are compositionally biased toward polar residues; it reads SDYNSYTHNQYY. Residues 125 to 139 are compositionally biased toward low complexity; the sequence is SIISSKSSNKSTTVV. In terms of domain architecture, Response regulatory spans 155 to 273; sequence SFLIVDDNII…LDFMANSIDD (119 aa). 4-aspartylphosphate is present on aspartate 206.

Required for stress adaptation, morphogenesis and virulence. This chain is Stress response regulator protein 1 (SRR1), found in Candida albicans (strain WO-1) (Yeast).